The following is a 275-amino-acid chain: uncharacterized protein (275 aa).

2 disordered regions span residues 1-25 (MIGG…DQEQ) and 185-275 (QRGE…RHHM). Positions 228 to 239 (KPGDGEENAKDD) are enriched in basic and acidic residues.

This is an uncharacterized protein from Neurospora crassa (strain ATCC 24698 / 74-OR23-1A / CBS 708.71 / DSM 1257 / FGSC 987).